Consider the following 124-residue polypeptide: Non-structural protein 2 (124 aa).

Residues 121 to 124 (DLNP) carry the DLNP; interaction with MAP1B motif.

This sequence belongs to the pneumovirus non-structural protein 2 family. In terms of assembly, monomer (instable). Homomultimer. Heteromultimer with NS1. Interacts with host RIGI (via N-terminus); this interaction prevents host signaling pathway involved in interferon production. Interacts with host MAP1B/microtubule-associated protein 1B.

Its subcellular location is the host mitochondrion. Plays a major role in antagonizing the type I IFN-mediated antiviral response. Acts cooperatively with NS1 to repress activation and nuclear translocation of host IFN-regulatory factor IRF3. Interacts with the host cytoplasmic sensor of viral nucleic acids RIGI and prevents the interaction with its downstream partner MAVS. Together with NS2, participates in the proteasomal degradation of host STAT2, IRF3, IRF7, TBK1 and RIGI through a NS-degradasome involving CUL2 and Elongin-C. The degradasome requires an intact mitochondrial MAVS. Induces host SOCS1 expression. Induces activation of NF-kappa-B. Suppresses premature apoptosis by an NF-kappa-B-dependent, interferon-independent mechanism promoting continued viral replication. This chain is Non-structural protein 2 (1B), found in Homo sapiens (Human).